We begin with the raw amino-acid sequence, 545 residues long: Capsular polysaccharide phosphotransferase SacB (545 aa).

It belongs to the stealth family.

Functionally, may be the polymerase that links individual UDP-N-acetyl-D-mannosamine monomers. In serotype A the capsule is composed of repeated units of (alpha 1-6)-linked N-acetyl-D-mannosamine-1-phosphate. The protein is Capsular polysaccharide phosphotransferase SacB (sacB) of Neisseria meningitidis serogroup A.